The chain runs to 640 residues: Fructose-1,6-bisphosphatase class 3 (640 aa).

This sequence belongs to the FBPase class 3 family. Mn(2+) is required as a cofactor.

The enzyme catalyses beta-D-fructose 1,6-bisphosphate + H2O = beta-D-fructose 6-phosphate + phosphate. The protein operates within carbohydrate biosynthesis; gluconeogenesis. The sequence is that of Fructose-1,6-bisphosphatase class 3 from Lactococcus lactis subsp. cremoris (strain MG1363).